A 430-amino-acid chain; its full sequence is MCDVVLGSQWGDEGKGKLVDLLCDDIDVCARCQGGNNAGHTIVVGDVKYDFHMLPSGLVNPNCLNLVGSGVVVHVPSFFQELENLEKKGLNCRDRLFLSSRAHLVFDFHQRTDKLKEAELSENKKAIGTTGKGIGPTYSTKASRSGIRVHHLVSEDPEAWEEFKTRYHRLVNSRKQRYGEFDYDVEEELARYEKYRELLRPFVVDSIEFMHTALVQNKRILVEGANALMLDIDFGTYPYVTSSSTGIGGVLTGLGIPPKTINNIYGVVKAYTTRVGEGPFPTEQLNEFGEALQTIGAEYGVTTGRKRRCGWLDLVVLKYSTLINGYTSLNITKLDVLDSFKEIQVGVGYKLNGKSLASFPEDLIKLGKVEVEYKTLPGWETDITKIKTYDELPENAKSYLKFIEDYLGVPVQWVGTGPARDSMLEKPISK.

GTP is bound by residues 11–17 and 39–41; these read GDEGKGK and GHT. Aspartate 12 functions as the Proton acceptor in the catalytic mechanism. Aspartate 12 and glycine 39 together coordinate Mg(2+). IMP contacts are provided by residues 12 to 15, 37 to 40, threonine 130, arginine 144, asparagine 226, threonine 241, and arginine 305; these read DEGK and NAGH. The Proton donor role is filled by histidine 40. Position 301–307 (301–307) interacts with substrate; the sequence is VTTGRKR. Residues arginine 307, 333–335, and 415–417 each bind GTP; these read KLD and GTG.

The protein belongs to the adenylosuccinate synthetase family. As to quaternary structure, homodimer. Requires Mg(2+) as cofactor.

It localises to the cytoplasm. It carries out the reaction IMP + L-aspartate + GTP = N(6)-(1,2-dicarboxyethyl)-AMP + GDP + phosphate + 2 H(+). It participates in purine metabolism; AMP biosynthesis via de novo pathway; AMP from IMP: step 1/2. Its function is as follows. Plays an important role in the de novo pathway and in the salvage pathway of purine nucleotide biosynthesis. Catalyzes the first committed step in the biosynthesis of AMP from IMP. In Scheffersomyces stipitis (strain ATCC 58785 / CBS 6054 / NBRC 10063 / NRRL Y-11545) (Yeast), this protein is Adenylosuccinate synthetase.